The chain runs to 327 residues: L-lactate dehydrogenase (327 aa).

Residues valine 18, aspartate 39, lysine 44, tyrosine 69, and glycine 83–alanine 84 contribute to the NAD(+) site. Residues glutamine 86, arginine 92, and asparagine 124–aspartate 127 contribute to the substrate site. Residues alanine 122–asparagine 124 and serine 147 each bind NAD(+). Aspartate 152–arginine 155 contributes to the substrate binding site. Positions 157 and 172 each coordinate beta-D-fructose 1,6-bisphosphate. Histidine 179 serves as the catalytic Proton acceptor. At tyrosine 224 the chain carries Phosphotyrosine. Threonine 233 is a substrate binding site.

Belongs to the LDH/MDH superfamily. LDH family. In terms of assembly, homotetramer.

The protein resides in the cytoplasm. The enzyme catalyses (S)-lactate + NAD(+) = pyruvate + NADH + H(+). It functions in the pathway fermentation; pyruvate fermentation to lactate; (S)-lactate from pyruvate: step 1/1. Its activity is regulated as follows. Allosterically activated by fructose 1,6-bisphosphate (FBP). Catalyzes the conversion of lactate to pyruvate. The sequence is that of L-lactate dehydrogenase from Streptococcus pyogenes serotype M3 (strain SSI-1).